Consider the following 433-residue polypeptide: MSYVKVEKASSFELTISDIAPDKSISHRSAMFSLLSDEPSQIENFLRAEDTLNTLEIVKALGAQVEESDEKILIKPPKQIQEPKDVLDCGNSGTGMRLFCGLLAGINGFFVLTGDKYLRERPMARVAKPLRSIGAKIDGRDNGNKAPLALRGNTDLEPFDYESPIASAQVKSALILAALRAKGECSISEPELSRDHTERMLQGMGANIDTHWSHGRYRVDVVPLTKPLEPLKIRIPADPSSAFFFAVAAAIAPRSKVVLENITLNPTRIEAFKVLQKMGADVVFLEKENKYEPIGDIIVTHNSLHGVEVSENIPWLIDELPALAIAMAVADGRSIVRNAKELRVKESDRITCVVENLKKCGIQAQEFEDGYEIIGGELHSAAIDSCGDHRIAMSFLIAGLVSGMEVRDIECIKTSFPNFLDLLSQIVKVERGD.

Lysine 23, serine 24, and arginine 28 together coordinate 3-phosphoshikimate. Residue lysine 23 participates in phosphoenolpyruvate binding. Phosphoenolpyruvate-binding residues include glycine 93 and arginine 121. Positions 167, 169, 318, and 345 each coordinate 3-phosphoshikimate. Glutamine 169 serves as a coordination point for phosphoenolpyruvate. Aspartate 318 serves as the catalytic Proton acceptor. Positions 349 and 390 each coordinate phosphoenolpyruvate.

It belongs to the EPSP synthase family. Monomer.

The protein localises to the cytoplasm. The enzyme catalyses 3-phosphoshikimate + phosphoenolpyruvate = 5-O-(1-carboxyvinyl)-3-phosphoshikimate + phosphate. The protein operates within metabolic intermediate biosynthesis; chorismate biosynthesis; chorismate from D-erythrose 4-phosphate and phosphoenolpyruvate: step 6/7. Its function is as follows. Catalyzes the transfer of the enolpyruvyl moiety of phosphoenolpyruvate (PEP) to the 5-hydroxyl of shikimate-3-phosphate (S3P) to produce enolpyruvyl shikimate-3-phosphate and inorganic phosphate. This Nitratiruptor sp. (strain SB155-2) protein is 3-phosphoshikimate 1-carboxyvinyltransferase.